We begin with the raw amino-acid sequence, 102 residues long: Caroteno-chlorophyll a-c-binding protein (102 aa).

Chlorophyll a is bound by residues Glu36 and His39. A helical membrane pass occupies residues 78–98 (VLGLIKIVPAGLWGIMIFYAA).

Belongs to the light-harvesting chlorophyll a/b-binding (LHC) protein family. In terms of assembly, the LHC complex consists of chlorophyll a-b binding proteins. It depends on Binds at least 14 chlorophylls (8 Chl-a and 6 Chl-b) and carotenoids such as lutein and neoxanthin. as a cofactor. Post-translationally, photoregulated by reversible phosphorylation of its threonine residues.

The protein localises to the plastid. Its subcellular location is the chloroplast thylakoid membrane. Functionally, the light-harvesting complex (LHC) functions as a light receptor, it captures and delivers excitation energy to photosystems with which it is closely associated. The sequence is that of Caroteno-chlorophyll a-c-binding protein from Amphidinium carterae (Dinoflagellate).